The chain runs to 347 residues: Phosphoribosylformylglycinamidine cyclo-ligase (347 aa).

Belongs to the AIR synthase family.

It is found in the cytoplasm. It catalyses the reaction 2-formamido-N(1)-(5-O-phospho-beta-D-ribosyl)acetamidine + ATP = 5-amino-1-(5-phospho-beta-D-ribosyl)imidazole + ADP + phosphate + H(+). It functions in the pathway purine metabolism; IMP biosynthesis via de novo pathway; 5-amino-1-(5-phospho-D-ribosyl)imidazole from N(2)-formyl-N(1)-(5-phospho-D-ribosyl)glycinamide: step 2/2. This Alkaliphilus metalliredigens (strain QYMF) protein is Phosphoribosylformylglycinamidine cyclo-ligase.